Here is a 645-residue protein sequence, read N- to C-terminus: Acetyl-coenzyme A synthetase (645 aa).

Residues 190 to 193 (RGGR) and Thr308 contribute to the CoA site. Residues 384–386 (GEP), 408–413 (DTWWQT), Asp497, and Arg512 contribute to the ATP site. Ser520 provides a ligand contact to CoA. Arg523 is an ATP binding site. Val534, His536, and Val539 together coordinate Mg(2+). Lys606 is subject to N6-acetyllysine.

This sequence belongs to the ATP-dependent AMP-binding enzyme family. Mg(2+) serves as cofactor. In terms of processing, acetylated. Deacetylation by the SIR2-homolog deacetylase activates the enzyme.

The catalysed reaction is acetate + ATP + CoA = acetyl-CoA + AMP + diphosphate. In terms of biological role, catalyzes the conversion of acetate into acetyl-CoA (AcCoA), an essential intermediate at the junction of anabolic and catabolic pathways. AcsA undergoes a two-step reaction. In the first half reaction, AcsA combines acetate with ATP to form acetyl-adenylate (AcAMP) intermediate. In the second half reaction, it can then transfer the acetyl group from AcAMP to the sulfhydryl group of CoA, forming the product AcCoA. The sequence is that of Acetyl-coenzyme A synthetase from Halorhodospira halophila (strain DSM 244 / SL1) (Ectothiorhodospira halophila (strain DSM 244 / SL1)).